The following is a 492-amino-acid chain: Tumor necrosis factor receptor superfamily member 8 (492 aa).

Positions 1–18 (MSILLKAAGLLFLGMLQA) are cleaved as a signal peptide. Over 19-282 (FPKDRPLDTT…STGTPFLDPG (264 aa)) the chain is Extracellular. 2 TNFR-Cys repeats span residues 57–104 (PCPQ…PRIC) and 105–141 (ECQP…NTIC). Cystine bridges form between Cys58-Cys80, Cys83-Cys96, Cys86-Cys104, and Cys123-Cys141. A disordered region spans residues 141–178 (CDLPSPGSGPNGSNPDDCKTLTSHTTPQAIPTLESPAN). Over residues 144–155 (PSPGSGPNGSNP) the composition is skewed to low complexity. N-linked (GlcNAc...) asparagine glycans are attached at residues Asn151, Asn178, and Asn224. Positions 160–178 (TLTSHTTPQAIPTLESPAN) are enriched in polar residues. Residues 283 to 303 (SMLFWVAMVVLLVGSASFLLC) traverse the membrane as a helical segment. Residues 304 to 492 (YWKACRRRFQ…DHEPTTVSEK (189 aa)) lie on the Cytoplasmic side of the membrane. Phosphoserine is present on residues Ser334 and Ser348. Disordered regions lie at residues 336–366 (PTEK…PPAV) and 432–492 (PEGR…VSEK). Over residues 339-360 (KLTQLQRSGSVTDSSAGHTLSP) the composition is skewed to polar residues. 2 stretches are compositionally biased toward basic and acidic residues: residues 450–459 (EVDHTPHYPE) and 478–492 (EGGK…VSEK).

The protein belongs to the TNFR8 family. In terms of assembly, interacts with TRAF1, TRAF2, TRAF3 and TRAF5. In terms of tissue distribution, very low level of expression. Detected in spleen, thymus and lung. Highly expressed in HTLV-1 infected T-cell lines.

The protein resides in the cell membrane. Its function is as follows. Receptor for TNFSF8/CD30L. May play a role in the regulation of cellular growth and transformation of activated lymphoblasts. Regulates gene expression through activation of NF-kappa-B. The sequence is that of Tumor necrosis factor receptor superfamily member 8 from Rattus norvegicus (Rat).